The chain runs to 277 residues: MSHPEHSPLGKASAYKTQYDPSLLFPIPRQAKRDEIGLAAGSALPFFGIDLWNLYELSWLNLKGKPQVAIGTVIVPADSPNIVESKSFKLYLNTFNQTKVASSEALQQLIHHDLSEACGAPVQVRIVPQEEFARQKMGELAGLSLDRLDVETDVYQPTPGLLHADQDESPVEEVLVSHLLKSNCLVTGQPDWGSVQIRYVGAPINQEGLLKYLISFREHNEFHEQCVERIFMDIQRQCRPVKLAVYARYTRRGGLDINPFRTNFNTPWPDNLRNARQ.

83–85 (VES) serves as a coordination point for substrate. An NADPH-binding site is contributed by 85–86 (SK). Cys184 (thioimide intermediate) is an active-site residue. The active-site Proton donor is Asp191. Residue 223-224 (HE) participates in substrate binding. Residue 252 to 253 (RG) participates in NADPH binding.

The protein belongs to the GTP cyclohydrolase I family. QueF type 2 subfamily. As to quaternary structure, homodimer.

Its subcellular location is the cytoplasm. It catalyses the reaction 7-aminomethyl-7-carbaguanine + 2 NADP(+) = 7-cyano-7-deazaguanine + 2 NADPH + 3 H(+). It participates in tRNA modification; tRNA-queuosine biosynthesis. Its function is as follows. Catalyzes the NADPH-dependent reduction of 7-cyano-7-deazaguanine (preQ0) to 7-aminomethyl-7-deazaguanine (preQ1). This chain is NADPH-dependent 7-cyano-7-deazaguanine reductase, found in Ralstonia nicotianae (strain ATCC BAA-1114 / GMI1000) (Ralstonia solanacearum).